The sequence spans 333 residues: Adenosine deaminase (333 aa).

Histidine 12 and histidine 14 together coordinate Zn(2+). Residues histidine 14, aspartate 16, and glycine 170 each contribute to the substrate site. Histidine 197 contacts Zn(2+). The active-site Proton donor is glutamate 200. Aspartate 278 contacts Zn(2+). Aspartate 279 contributes to the substrate binding site.

Belongs to the metallo-dependent hydrolases superfamily. Adenosine and AMP deaminases family. Adenosine deaminase subfamily. Zn(2+) serves as cofactor.

The catalysed reaction is adenosine + H2O + H(+) = inosine + NH4(+). It carries out the reaction 2'-deoxyadenosine + H2O + H(+) = 2'-deoxyinosine + NH4(+). In terms of biological role, catalyzes the hydrolytic deamination of adenosine and 2-deoxyadenosine. This chain is Adenosine deaminase, found in Klebsiella pneumoniae (strain 342).